A 184-amino-acid chain; its full sequence is NADH-quinone oxidoreductase subunit B (184 aa).

Cys-37, Cys-38, Cys-103, and Cys-132 together coordinate [4Fe-4S] cluster.

This sequence belongs to the complex I 20 kDa subunit family. As to quaternary structure, NDH-1 is composed of 14 different subunits. Subunits NuoB, C, D, E, F, and G constitute the peripheral sector of the complex. [4Fe-4S] cluster serves as cofactor.

Its subcellular location is the cell membrane. It catalyses the reaction a quinone + NADH + 5 H(+)(in) = a quinol + NAD(+) + 4 H(+)(out). In terms of biological role, NDH-1 shuttles electrons from NADH, via FMN and iron-sulfur (Fe-S) centers, to quinones in the respiratory chain. The immediate electron acceptor for the enzyme in this species is believed to be a menaquinone. Couples the redox reaction to proton translocation (for every two electrons transferred, four hydrogen ions are translocated across the cytoplasmic membrane), and thus conserves the redox energy in a proton gradient. The sequence is that of NADH-quinone oxidoreductase subunit B from Beutenbergia cavernae (strain ATCC BAA-8 / DSM 12333 / CCUG 43141 / JCM 11478 / NBRC 16432 / NCIMB 13614 / HKI 0122).